Here is a 168-residue protein sequence, read N- to C-terminus: Zinc finger A20 and AN1 domain-containing stress-associated protein 1 (168 aa).

The A20-type zinc-finger motif lies at 13–47; it reads PSEPKLCVKGCGFFGSPSNMNLCSKCYRDIRATEE. Positions 19, 23, 35, and 38 each coordinate Zn(2+). The interval 49 to 105 is disordered; that stretch reads TASAKAAVEKSLNPNKPKTQPQQSQEITQGVLGSGSSSSSTRGGDSAAAPLDPPKST. Residues 60–76 are compositionally biased toward polar residues; that stretch reads LNPNKPKTQPQQSQEIT. The span at 82 to 94 shows a compositional bias: low complexity; sequence SGSSSSSTRGGDS. The segment at 103 to 149 adopts an AN1-type zinc-finger fold; the sequence is KSTATRCLSCNKKVGVTGFKCRCGSTFCGTHRYPESHECQFDFKGVA. Residues Cys-109, Cys-112, Cys-123, Cys-125, Cys-130, His-133, His-139, and Cys-141 each coordinate Zn(2+).

In terms of biological role, may be involved in environmental stress response. In Arabidopsis thaliana (Mouse-ear cress), this protein is Zinc finger A20 and AN1 domain-containing stress-associated protein 1 (SAP1).